A 174-amino-acid polypeptide reads, in one-letter code: Gamma-crystallin A (174 aa).

2 Beta/gamma crystallin 'Greek key' domains span residues 2-40 (GKIT…RVDS) and 41-83 (GCWM…RSIP). The tract at residues 84-87 (YTSS) is connecting peptide. Beta/gamma crystallin 'Greek key' domains follow at residues 88 to 128 (HRIR…HVLE) and 129 to 171 (GSWV…RRVM).

It belongs to the beta/gamma-crystallin family.

Its function is as follows. Crystallins are the dominant structural components of the vertebrate eye lens. In Rattus norvegicus (Rat), this protein is Gamma-crystallin A (Cryga).